A 228-amino-acid chain; its full sequence is UPF0173 metal-dependent hydrolase RBAM_026340 (228 aa).

Belongs to the UPF0173 family.

This Bacillus velezensis (strain DSM 23117 / BGSC 10A6 / LMG 26770 / FZB42) (Bacillus amyloliquefaciens subsp. plantarum) protein is UPF0173 metal-dependent hydrolase RBAM_026340.